Consider the following 154-residue polypeptide: Keratin-associated protein 9-9 (154 aa).

A run of 14 repeats spans residues 8–12 (CCQPT), 13–17 (CCRTT), 18–22 (CCRTT), 37–41 (CCQPS), 42–46 (CCVSS), 51–55 (CCRPA), 56–60 (CCQNT), 61–65 (CCRTT), 66–70 (CCQPT), 75–79 (CCGQT), 124–128 (CCRPA), 129–133 (CCETT), 134–137 (CCRT), and 148–152 (CCQPS). Residues 8–152 (CCQPTCCRTT…TCVSSCCQPS (145 aa)) are 14 X 5 AA repeats of C-C-[RQVGE]-[SPSTNQ]-[TASL].

The protein belongs to the KRTAP type 9 family. Interacts with hair keratins.

In terms of biological role, in the hair cortex, hair keratin intermediate filaments are embedded in an interfilamentous matrix, consisting of hair keratin-associated proteins (KRTAP), which are essential for the formation of a rigid and resistant hair shaft through their extensive disulfide bond cross-linking with abundant cysteine residues of hair keratins. The matrix proteins include the high-sulfur and high-glycine-tyrosine keratins. The chain is Keratin-associated protein 9-9 (KRTAP9-9) from Homo sapiens (Human).